The following is a 324-amino-acid chain: COP9 signalosome complex subunit 6 (324 aa).

One can recognise an MPN domain in the interval 38 to 171; the sequence is VALHPLVILN…VSVFESVIDI (134 aa).

The protein belongs to the peptidase M67A family. CSN6 subfamily. In terms of assembly, component of the CSN complex, composed of COPS1/GPS1, COPS2, COPS3, COPS4, COPS5, COPS6, COPS7 (COPS7A or COPS7B), COPS8 and COPS9. In the complex, it probably interacts directly with COPS2, COPS4, COPS5, COPS7 (COPS7A or COPS7B) and COPS9. Interacts with the translation initiation factor EIF3S6. Interacts weakly with RBX1. Directly interacts with COP1 and 14-3-3 protein sigma/SFN. Interacts with ERCC6.

The protein localises to the cytoplasm. It is found in the nucleus. Its function is as follows. Component of the COP9 signalosome complex (CSN), a complex involved in various cellular and developmental processes. The CSN complex is an essential regulator of the ubiquitin (Ubl) conjugation pathway by mediating the deneddylation of the cullin subunits of SCF-type E3 ligase complexes, leading to decrease the Ubl ligase activity of SCF-type complexes such as SCF, CSA or DDB2. The complex is also involved in phosphorylation of p53/TP53, c-jun/JUN, IkappaBalpha/NFKBIA, ITPK1 and IRF8, possibly via its association with CK2 and PKD kinases. CSN-dependent phosphorylation of TP53 and JUN promotes and protects degradation by the Ubl system, respectively. Has some glucocorticoid receptor-responsive activity. Stabilizes COP1 through reducing COP1 auto-ubiquitination and decelerating COP1 turnover rate, hence regulates the ubiquitination of COP1 targets, including SFN. This chain is COP9 signalosome complex subunit 6 (COPS6), found in Bos taurus (Bovine).